The primary structure comprises 82 residues: Small ribosomal subunit protein bS16 (82 aa).

It belongs to the bacterial ribosomal protein bS16 family.

The chain is Small ribosomal subunit protein bS16 from Klebsiella pneumoniae subsp. pneumoniae (strain ATCC 700721 / MGH 78578).